The following is an 808-amino-acid chain: Sucrose synthase 2 (808 aa).

S10 carries the post-translational modification Phosphoserine; by CPK. A GT-B glycosyltransferase region spans residues 272 to 749; the sequence is MMFNVVILSP…GLQRIYEKYT (478 aa).

Belongs to the glycosyltransferase 1 family. Plant sucrose synthase subfamily. As to quaternary structure, homotetramer or heterotetramer with SUS1. Phosphorylated at Ser-10 by CPK23 in developing seeds. As to expression, predominantly expressed in the leaf tissues. Expressed in seeds, and at lower levels in roots. Expressed in leaf mesophyll and phloem (at protein level).

It catalyses the reaction an NDP-alpha-D-glucose + D-fructose = a ribonucleoside 5'-diphosphate + sucrose + H(+). With respect to regulation, activated by phosphorylation at Ser-10 by CPK23. Its function is as follows. Sucrose-cleaving enzyme that provides UDP-glucose and fructose for various metabolic pathways. Functions in developing seeds by supplying substrates for the biosynthesis of storage products. The polypeptide is Sucrose synthase 2 (SUS2) (Oryza sativa subsp. japonica (Rice)).